Consider the following 100-residue polypeptide: NADH-quinone oxidoreductase subunit K (100 aa).

The next 3 membrane-spanning stretches (helical) occupy residues Leu4–Val24, Leu28–Val48, and Val60–Leu80.

Belongs to the complex I subunit 4L family. NDH-1 is composed of 13 different subunits. Subunits NuoA, H, J, K, L, M, N constitute the membrane sector of the complex.

The protein resides in the cell inner membrane. The enzyme catalyses a quinone + NADH + 5 H(+)(in) = a quinol + NAD(+) + 4 H(+)(out). In terms of biological role, NDH-1 shuttles electrons from NADH, via FMN and iron-sulfur (Fe-S) centers, to quinones in the respiratory chain. The immediate electron acceptor for the enzyme in this species is believed to be ubiquinone. Couples the redox reaction to proton translocation (for every two electrons transferred, four hydrogen ions are translocated across the cytoplasmic membrane), and thus conserves the redox energy in a proton gradient. This is NADH-quinone oxidoreductase subunit K from Serratia proteamaculans (strain 568).